A 364-amino-acid chain; its full sequence is Methylthioribose-1-phosphate isomerase (364 aa).

Substrate is bound by residues 49–51, R89, and Q201; that span reads RGA. D242 functions as the Proton donor in the catalytic mechanism. Position 252–253 (252–253) interacts with substrate; the sequence is NK.

It belongs to the eIF-2B alpha/beta/delta subunits family. MtnA subfamily.

The catalysed reaction is 5-(methylsulfanyl)-alpha-D-ribose 1-phosphate = 5-(methylsulfanyl)-D-ribulose 1-phosphate. The protein operates within amino-acid biosynthesis; L-methionine biosynthesis via salvage pathway; L-methionine from S-methyl-5-thio-alpha-D-ribose 1-phosphate: step 1/6. Functionally, catalyzes the interconversion of methylthioribose-1-phosphate (MTR-1-P) into methylthioribulose-1-phosphate (MTRu-1-P). The sequence is that of Methylthioribose-1-phosphate isomerase from Leptospira interrogans serogroup Icterohaemorrhagiae serovar Lai (strain 56601).